Consider the following 71-residue polypeptide: MAQVIFNEEWMVEYGLMLRTGLGARQIEAYRQNCWVEGFHFKRVSPLGKPDSKRGIIWYNYPKINQFIKDS.

This is an uncharacterized protein from Escherichia coli (strain K12).